We begin with the raw amino-acid sequence, 321 residues long: Cytoskeleton protein RodZ (321 aa).

Residues 1-111 (MNTEATHDQN…LGKRRKKRDG (111 aa)) are Cytoplasmic-facing. The 53-residue stretch at 19–71 (LRNAREQLGLSQQAVAERLCLKVSTVRDIEEDKAPSDLASTFLRGYIRSYARL) folds into the HTH cro/C1-type domain. The H-T-H motif DNA-binding region spans 30–49 (QQAVAERLCLKVSTVRDIEE). Residues 112 to 132 (WLMSFTWLVLFVVVGLTGAWW) traverse the membrane as a helical; Signal-anchor for type II membrane protein segment. Topologically, residues 133–321 (WQNHKAQQEE…TINAEPTSAQ (189 aa)) are periplasmic. Residues 167-190 (DTRAAASQDTTPAETAPAAPVDST) form a disordered region. The segment covering 176-190 (TTPAETAPAAPVDST) has biased composition (low complexity).

The protein belongs to the RodZ family.

Its subcellular location is the cell inner membrane. Functionally, cytoskeletal protein that is involved in cell-shape control through regulation of the length of the long axis. The sequence is that of Cytoskeleton protein RodZ from Salmonella arizonae (strain ATCC BAA-731 / CDC346-86 / RSK2980).